A 205-amino-acid chain; its full sequence is N-(5'-phosphoribosyl)anthranilate isomerase (205 aa).

Belongs to the TrpF family.

It catalyses the reaction N-(5-phospho-beta-D-ribosyl)anthranilate = 1-(2-carboxyphenylamino)-1-deoxy-D-ribulose 5-phosphate. The protein operates within amino-acid biosynthesis; L-tryptophan biosynthesis; L-tryptophan from chorismate: step 3/5. The protein is N-(5'-phosphoribosyl)anthranilate isomerase of Clostridium acetobutylicum (strain ATCC 824 / DSM 792 / JCM 1419 / IAM 19013 / LMG 5710 / NBRC 13948 / NRRL B-527 / VKM B-1787 / 2291 / W).